The primary structure comprises 213 residues: LIM domain-containing protein PLIM2c (213 aa).

LIM zinc-binding domains are found at residues 9–69 (DKCK…LFKE) and 105–165 (DKCA…LFLE). The disordered stretch occupies residues 177 to 213 (ANHRRSTAEEDKTEPKEDEANPTEEETSDAAAEEHES). The span at 182-195 (STAEEDKTEPKEDE) shows a compositional bias: basic and acidic residues.

As to quaternary structure, interacts with F-actin. As to expression, exclusively expressed in pollen grains.

The protein localises to the cytoplasm. The protein resides in the cytoskeleton. In terms of biological role, binds to actin filaments and promotes cross-linking into thick bundles. Has an actin-stabilizing activity. Associates predominantly with long and dynamic actin bundles in the shank of growing pollen tubes. The actin regulatory activities are inhibited by pH &gt; 6.8 and/or high [Ca(2+)]. The chain is LIM domain-containing protein PLIM2c from Arabidopsis thaliana (Mouse-ear cress).